We begin with the raw amino-acid sequence, 286 residues long: Plasma membrane ascorbate-dependent reductase CYBRD1 (286 aa).

The Cytoplasmic segment spans residues M1–W7. Residues R8–L32 form a helical membrane-spanning segment. Positions S15–T220 constitute a Cytochrome b561 domain. Topologically, residues H33–F47 are extracellular. A helical transmembrane segment spans residues N48–Y69. The heme b site is built by H50, R70, and K79. Over R70–S78 the chain is Cytoplasmic. Residues K79 and K83 each coordinate L-ascorbate. Residues K79–F105 form a helical membrane-spanning segment. A heme b-binding site is contributed by H86. The Extracellular segment spans residues E106 to S118. Fe(3+) is bound at residue H108. Heme b-binding positions include N115 to S118 and H120. A helical transmembrane segment spans residues L119–L144. The Cytoplasmic portion of the chain corresponds to P145–L151. R152 contributes to the L-ascorbate binding site. Residues R152–T179 traverse the membrane as a helical segment. 2 residues coordinate heme b: H159 and E180. Topologically, residues E180 to E197 are extracellular. Residues G198 to P222 traverse the membrane as a helical segment. The Cytoplasmic segment spans residues Q223–M286. Heme b is bound at residue K225. Positions E229–V268 are disordered. Phosphoserine is present on S232. T285 is modified (phosphothreonine).

In terms of assembly, homodimer. It depends on heme b as a cofactor. In terms of tissue distribution, present in erythrocyte membranes (at protein level). Also expressed in respiratory epithelium.

The protein localises to the cell membrane. Its subcellular location is the apical cell membrane. The enzyme catalyses Fe(3+)(out) + L-ascorbate(in) = monodehydro-L-ascorbate radical(in) + Fe(2+)(out) + H(+). It catalyses the reaction Cu(2+)(out) + L-ascorbate(in) = Cu(+)(out) + monodehydro-L-ascorbate radical(in) + H(+). It carries out the reaction monodehydro-L-ascorbate radical(out) + L-ascorbate(in) = monodehydro-L-ascorbate radical(in) + L-ascorbate(out). Activated by chelators like citrate, malate, and oxalate specially at alkaline pH. Functionally, plasma membrane reductase that uses cytoplasmic ascorbate as an electron donor to reduce extracellular Fe(3+) into Fe(2+). Probably functions in dietary iron absorption at the brush border of duodenal enterocytes by producing Fe(2+), the divalent form of iron that can be transported into enterocytes. It is also able to reduce extracellular monodehydro-L-ascorbate and may be involved in extracellular ascorbate regeneration by erythrocytes in blood. May also act as a ferrireductase in airway epithelial cells. May also function as a cupric transmembrane reductase. This chain is Plasma membrane ascorbate-dependent reductase CYBRD1, found in Homo sapiens (Human).